We begin with the raw amino-acid sequence, 327 residues long: Complex I intermediate-associated protein 30, mitochondrial (327 aa).

The N-terminal 24 residues, 1 to 24 (MALVHKLLRGTYFLRKFXKPTSAL), are a transit peptide targeting the mitochondrion. A disordered region spans residues 42 to 63 (PVASPGKASSQRKTEGDLQGDH). Positions 53–63 (RKTEGDLQGDH) are enriched in basic and acidic residues. Residue Ser-318 is modified to Phosphoserine.

This sequence belongs to the CIA30 family. Part of the mitochondrial complex I assembly/MCIA complex that comprises at least the core subunits TMEM126B, NDUFAF1, ECSIT and ACAD9 and complement subunits such as COA1 and TMEM186. Interacts with ECSIT. Interacts with ACAD9. At early stages of complex I assembly, it is found in intermediate subcomplexes that contain different subunits including NDUFB6, NDUFA6, NDUFA9, NDUFS3, NDUFS7, ND1, ND2 and ND3. Interacts with TMEM70 and TMEM242.

Its subcellular location is the mitochondrion. The protein resides in the mitochondrion matrix. Its function is as follows. As part of the MCIA complex, involved in the assembly of the mitochondrial complex I. This is Complex I intermediate-associated protein 30, mitochondrial from Pan troglodytes (Chimpanzee).